Consider the following 85-residue polypeptide: Large ribosomal subunit protein bL27 (85 aa).

The segment at 1 to 22 (MAHKKAGGSTRNGRDSESKRLG) is disordered.

The protein belongs to the bacterial ribosomal protein bL27 family.

This is Large ribosomal subunit protein bL27 from Marinomonas sp. (strain MWYL1).